The sequence spans 249 residues: DNA polymerase sliding clamp (249 aa).

It belongs to the PCNA family. As to quaternary structure, homotrimer. The subunits circularize to form a toroid; DNA passes through its center. Replication factor C (RFC) is required to load the toroid on the DNA.

In terms of biological role, sliding clamp subunit that acts as a moving platform for DNA processing. Responsible for tethering the catalytic subunit of DNA polymerase and other proteins to DNA during high-speed replication. The chain is DNA polymerase sliding clamp from Thermococcus onnurineus (strain NA1).